A 200-amino-acid polypeptide reads, in one-letter code: Probable nicotinate-nucleotide adenylyltransferase (200 aa).

It belongs to the NadD family.

It carries out the reaction nicotinate beta-D-ribonucleotide + ATP + H(+) = deamido-NAD(+) + diphosphate. The protein operates within cofactor biosynthesis; NAD(+) biosynthesis; deamido-NAD(+) from nicotinate D-ribonucleotide: step 1/1. Functionally, catalyzes the reversible adenylation of nicotinate mononucleotide (NaMN) to nicotinic acid adenine dinucleotide (NaAD). In Clostridium botulinum (strain Alaska E43 / Type E3), this protein is Probable nicotinate-nucleotide adenylyltransferase.